A 207-amino-acid chain; its full sequence is HTH-type transcriptional regulator BetI 2 (207 aa).

The HTH tetR-type domain maps to 8–68 (PIRRQQLIKA…ATMRQILTDL (61 aa)). The segment at residues 31-50 (TVMRIARHAGVSAGIISHYF) is a DNA-binding region (H-T-H motif).

The protein operates within amine and polyamine biosynthesis; betaine biosynthesis via choline pathway [regulation]. Its function is as follows. Repressor involved in the biosynthesis of the osmoprotectant glycine betaine. It represses transcription of the choline transporter BetT and the genes of BetAB involved in the synthesis of glycine betaine. This is HTH-type transcriptional regulator BetI 2 from Chromohalobacter salexigens (strain ATCC BAA-138 / DSM 3043 / CIP 106854 / NCIMB 13768 / 1H11).